Here is a 236-residue protein sequence, read N- to C-terminus: Small ribosomal subunit protein uS2c (236 aa).

The protein belongs to the universal ribosomal protein uS2 family.

Its subcellular location is the plastid. The protein localises to the chloroplast. The sequence is that of Small ribosomal subunit protein uS2c (rps2) from Acorus calamus var. americanus (American sweet flag).